A 427-amino-acid chain; its full sequence is Phosphatidate cytidylyltransferase, mitochondrial (427 aa).

The segment covering 94-106 (YNRNGDGSTSTEN) has biased composition (polar residues). The disordered stretch occupies residues 94–113 (YNRNGDGSTSTENPSKKEEQ).

Belongs to the TAM41 family. Requires Mg(2+) as cofactor.

The protein resides in the mitochondrion inner membrane. It carries out the reaction a 1,2-diacyl-sn-glycero-3-phosphate + CTP + H(+) = a CDP-1,2-diacyl-sn-glycerol + diphosphate. It participates in phospholipid metabolism; CDP-diacylglycerol biosynthesis; CDP-diacylglycerol from sn-glycerol 3-phosphate: step 3/3. Catalyzes the formation of CDP-diacylglycerol (CDP-DAG) from phosphatidic acid (PA) in the mitochondrial inner membrane. Required for the biosynthesis of the dimeric phospholipid cardiolipin, which stabilizes supercomplexes of the mitochondrial respiratory chain in the mitochondrial inner membrane. The polypeptide is Phosphatidate cytidylyltransferase, mitochondrial (Dictyostelium discoideum (Social amoeba)).